The sequence spans 501 residues: Geissoschizine oxidase (501 aa).

A helical transmembrane segment spans residues 1 to 21; that stretch reads MEFSFSSPLLYILYFLLFFIV. Cys442 is a binding site for heme.

Belongs to the cytochrome P450 family. Heme is required as a cofactor.

Its subcellular location is the membrane. The enzyme catalyses (19E)-geissoschizine + reduced [NADPH--hemoprotein reductase] + O2 = akuammicine + formate + oxidized [NADPH--hemoprotein reductase] + H2O + H(+). The protein operates within alkaloid biosynthesis. A cytochrome P450 monooxygenase involved in the biosynthesis of strychnos monoterpene indole alkaloids (MIAs) natural products, compounds with effects on glucose absorption. Catalyzes the conversion of geissoschizine to akuammicine. This chain is Geissoschizine oxidase, found in Alstonia scholaris (Dogbane).